The primary structure comprises 394 residues: MFKKFLWRDCVFIIVLITTIALPAYIHTNYPQAFSRFFYPVEAWFTKRDLRCSKNAPHFLRQLLIEMIDEQKSLNNQVAFWHNGQLFHCESGWEDGFRGEKPMRVNSRFRYASVTKVLTSALVLHAINEQKLSLDSKIIELLELPAPKDPRVAAITIKMLLEHSAGFDRLKTYTPMLTMDVKPWCPTNLAQLSETKLDFDPETQFQYSNVGYCLLGAAIEKAYGRSFQSVAEDYFQLKKYGVSYVGDGFLPDEIQYDYRFEPFYAESYSKHFDFKDSLYAVGGLSGSAADIVQLLAALPKETPLTIFSHNHAPCSINILDACYGYALQPYQASRQSYTLWGKSGFFPGVNTDVFLDEQGNILATFRAASTKKTADTLLLRQYAYSLMNEYVNQK.

The protein is Probable fimbrial assembly protein FimD, serogroup H1 (fimD) of Dichelobacter nodosus (Bacteroides nodosus).